A 212-amino-acid chain; its full sequence is Probable NADH dehydrogenase [ubiquinone] iron-sulfur protein 8, mitochondrial (212 aa).

2 consecutive 4Fe-4S ferredoxin-type domains span residues 104-133 and 143-172; these read RRYPSGEERCIACKLCEAICPAQAITIEAE and TRYDIDMTKCIYCGLCQEACPVDAIVEGPN. [4Fe-4S] cluster contacts are provided by Cys113, Cys116, Cys119, Cys123, Cys152, Cys155, Cys158, and Cys162.

This sequence belongs to the complex I 23 kDa subunit family. Complex I is composed of 45 different subunits This is a component of the iron-sulfur (IP) fragment of the enzyme. It depends on [4Fe-4S] cluster as a cofactor.

It is found in the mitochondrion. The catalysed reaction is a ubiquinone + NADH + 5 H(+)(in) = a ubiquinol + NAD(+) + 4 H(+)(out). Functionally, core subunit of the mitochondrial membrane respiratory chain NADH dehydrogenase (Complex I) that is believed to belong to the minimal assembly required for catalysis. Complex I functions in the transfer of electrons from NADH to the respiratory chain. The immediate electron acceptor for the enzyme is believed to be ubiquinone. The protein is Probable NADH dehydrogenase [ubiquinone] iron-sulfur protein 8, mitochondrial of Caenorhabditis elegans.